A 385-amino-acid polypeptide reads, in one-letter code: Enoyl-[acyl-carrier-protein] reductase, mitochondrial (385 aa).

Tyrosine 78 acts as the Proton donor in catalysis. NADP(+) is bound by residues asparagine 162, 190-193, 213-215, 288-291, 313-315, and lysine 378; these read TSGV, RDR, YGGM, and YWV.

The protein belongs to the zinc-containing alcohol dehydrogenase family. Quinone oxidoreductase subfamily. In terms of assembly, homodimer.

It localises to the mitochondrion matrix. The catalysed reaction is a 2,3-saturated acyl-[ACP] + NADP(+) = a (2E)-enoyl-[ACP] + NADPH + H(+). Functionally, catalyzes the NADPH-dependent reduction of trans-2-enoyl thioesters in mitochondrial fatty acid synthesis (fatty acid synthesis type II). Fatty acid chain elongation in mitochondria uses acyl carrier protein (ACP) as an acyl group carrier, but the enzyme accepts both ACP and CoA thioesters as substrates in vitro. Required for respiration and the maintenance of the mitochondrial compartment. This Candida glabrata (strain ATCC 2001 / BCRC 20586 / JCM 3761 / NBRC 0622 / NRRL Y-65 / CBS 138) (Yeast) protein is Enoyl-[acyl-carrier-protein] reductase, mitochondrial (ETR1).